The sequence spans 180 residues: Large ribosomal subunit protein uL6 (180 aa).

This sequence belongs to the universal ribosomal protein uL6 family. In terms of assembly, part of the 50S ribosomal subunit.

Functionally, this protein binds to the 23S rRNA, and is important in its secondary structure. It is located near the subunit interface in the base of the L7/L12 stalk, and near the tRNA binding site of the peptidyltransferase center. The polypeptide is Large ribosomal subunit protein uL6 (Anaeromyxobacter sp. (strain Fw109-5)).